A 99-amino-acid polypeptide reads, in one-letter code: uncharacterized protein (99 aa).

The helical transmembrane segment at 74–90 (FLSLPLGHSYLFLFCFW) threads the bilayer.

Its subcellular location is the membrane. This is an uncharacterized protein from Saccharomyces cerevisiae (strain ATCC 204508 / S288c) (Baker's yeast).